The primary structure comprises 511 residues: NADH-quinone oxidoreductase subunit N 1 (511 aa).

Transmembrane regions (helical) follow at residues 15–35, 46–66, 89–109, 120–140, 142–162, 177–197, 221–241, 264–284, 289–309, 317–337, 347–367, 393–413, 426–446, and 471–491; these read LALPMLVLSGFAVAILLLDLV, ALALAGLAAATMSLAKVWQAV, FAIYFYLLFIVGAAVAILMSI, GEYHALILFATIGMMCMASGM, LILLFVGLELMALSTYVLVGF, LLLGAFSSGIFAYGLSLFYGL, PIALLALITTATGLLFKIAAV, VAVKAAGWAMLLRIFLFMLWP, YTPILIFVAVATMIGGNFAAL, LLAYSSISHVGYMLLGLVASD, GILVYLAVYTFMNLGAFAVIT, AVLLLVFLLSLAGIPPLAGFW, GHYTLAVVAVLFAVLGMYYYL, and AALWISALGTLGIGLFPEVFL.

This sequence belongs to the complex I subunit 2 family. NDH-1 is composed of 14 different subunits. Subunits NuoA, H, J, K, L, M, N constitute the membrane sector of the complex.

Its subcellular location is the cell inner membrane. It catalyses the reaction a quinone + NADH + 5 H(+)(in) = a quinol + NAD(+) + 4 H(+)(out). NDH-1 shuttles electrons from NADH, via FMN and iron-sulfur (Fe-S) centers, to quinones in the respiratory chain. The immediate electron acceptor for the enzyme in this species is believed to be ubiquinone. Couples the redox reaction to proton translocation (for every two electrons transferred, four hydrogen ions are translocated across the cytoplasmic membrane), and thus conserves the redox energy in a proton gradient. The chain is NADH-quinone oxidoreductase subunit N 1 from Koribacter versatilis (strain Ellin345).